We begin with the raw amino-acid sequence, 307 residues long: Barttin (307 aa).

The Cytoplasmic portion of the chain corresponds to 1–5 (MADEK). The regulates channel membrane trafficking and anion conductance stretch occupies residues 1–72 (MADEKTFRIG…VPADSDFQGI (72 aa)). The helical transmembrane segment at 6-26 (TFRIGFIVLGLFLLSLGTFLM) threads the bilayer. Over 27-32 (SHDRPQ) the chain is Extracellular. A helical transmembrane segment spans residues 33-53 (VYGTFYAMGSVMVIGGVIWSM). 2 S-palmitoyl cysteine lipidation sites follow: Cys54 and Cys56. Residues 54–307 (CQCYPKITFV…ELGFEPDIQG (254 aa)) are Cytoplasmic-facing. Residues Ser79 and Ser107 each carry the phosphoserine modification. Disordered stretches follow at residues 135 to 154 (TGAS…WMEA) and 161 to 224 (GSDE…RGPL). The segment covering 161–171 (GSDENEGEKSH) has biased composition (basic and acidic residues). The residue at position 162 (Ser162) is a Phosphoserine. A compositionally biased stretch (low complexity) spans 172 to 183 (SQSSPSVGPQGS). The span at 198 to 207 (SEGSSLQPSP) shows a compositional bias: polar residues. Residues Ser228 and Ser289 each carry the phosphoserine modification. The disordered stretch occupies residues 255 to 307 (RKQQWSLRMKGETVQARAEEPEQEEEDLYYGLPDSPGNPLPDKELGFEPDIQG).

Interacts with CLCNK channels. Forms probably heteromers with CLCNKA in the thin ascending limb of Henle and with CLCNKB in the thick ascending limb and more distal segments. Post-translationally, palmitoylation is necessary for activation of plasma membrane-inserted CLC-K/barttin channels. Expression is evident in inner and outer stripes of the outer medulla of the kidney, most probably representing thin limbs of Henle's loop together with some collecting duct coursing through the outer stripe. In situ hybridization in fetal kidney at 18.5 dpc revealed a clear continuity between hybridization signals from the thin limb of Henle's loop and the distal convoluted tubule, suggesting that part of the expression pattern may result from expression in the thick ascending limb of Henle's loop. In addition, strong signals are present in a subset of cortical tubules, representing distal convoluted tubules or cortical collecting duct. Strong expression is also observed in the inner medulla of the kidney. This expression does not extend all the way to the tip of the papilla. Thus this signal most probably represents cells of the thin ascending limbs. In the inner ear, strong and exclusive expression is detected in marginal cells of the stria vascularis. In addition to cochlear signal, expression is observed in dark cells localized at the base of the crista ampullaris of the vestibular organ.

It is found in the basolateral cell membrane. Its function is as follows. Regulatory subunit of anion-selective CLCNKA:BSND and CLCNKB:BSND heteromeric channels involved in basolateral chloride conductance along the nephron to achieve urine concentration and maintain systemic acid-base homeostasis, and in the stria vascularis of the inner ear to establish the endocochlear potential necessary for normal hearing. Most likely acts as a chaperone that allosterically regulates proper sorting of CLCNKA:BSND and CLCNKB:BSND channels at the basolateral plasma membrane domain and functional switch to ion conducting state. Mediates constitutive opening of channel common gates. The chain is Barttin from Mus musculus (Mouse).